A 251-amino-acid polypeptide reads, in one-letter code: Ubiquinone biosynthesis O-methyltransferase (251 aa).

S-adenosyl-L-methionine is bound by residues R36, G61, D82, and I124.

This sequence belongs to the methyltransferase superfamily. UbiG/COQ3 family.

The catalysed reaction is a 3-demethylubiquinol + S-adenosyl-L-methionine = a ubiquinol + S-adenosyl-L-homocysteine + H(+). It catalyses the reaction a 3-(all-trans-polyprenyl)benzene-1,2-diol + S-adenosyl-L-methionine = a 2-methoxy-6-(all-trans-polyprenyl)phenol + S-adenosyl-L-homocysteine + H(+). It functions in the pathway cofactor biosynthesis; ubiquinone biosynthesis. Its function is as follows. O-methyltransferase that catalyzes the 2 O-methylation steps in the ubiquinone biosynthetic pathway. In Rickettsia akari (strain Hartford), this protein is Ubiquinone biosynthesis O-methyltransferase.